The following is a 456-amino-acid chain: RuvB-like 1 (456 aa).

Lys-2 is covalently cross-linked (Glycyl lysine isopeptide (Lys-Gly) (interchain with G-Cter in SUMO2)). ATP is bound at residue 70–77 (GPPGTGKT). Residue Lys-225 forms a Glycyl lysine isopeptide (Lys-Gly) (interchain with G-Cter in SUMO1); alternate linkage. A Glycyl lysine isopeptide (Lys-Gly) (interchain with G-Cter in SUMO2); alternate cross-link involves residue Lys-225. A Glycyl lysine isopeptide (Lys-Gly) (interchain with G-Cter in SUMO2) cross-link involves residue Lys-445. An N6-acetyllysine modification is found at Lys-453.

It belongs to the RuvB family. Forms homohexameric rings. Can form a dodecamer with RUVBL2 made of two stacked hexameric rings; however, even though RUVBL1 and RUVBL2 are present in equimolar ratio, the oligomeric status of each hexamer is not known. Oligomerization may regulate binding to nucleic acids and conversely, binding to nucleic acids may affect the dodecameric assembly. Interaction of the complex with DHX34 results in conformational changes of the N-terminus of the RUVBL2 subunits, resulting in loss of nucleotide binding ability and ATP hydrolysis of the complex. Interacts with the transcriptional activation domain of MYC. Component of the RNA polymerase II holoenzyme complex. May also act to bridge the LEF1/TCF1-CTNNB1 complex and TBP. Component of the NuA4 histone acetyltransferase complex which contains the catalytic subunit KAT5/TIP60 and the subunits EP400, TRRAP/PAF400, BRD8/SMAP, EPC1, DMAP1/DNMAP1, RUVBL1/TIP49, RUVBL2, ING3, actin, ACTL6A/BAF53A, MORF4L1/MRG15, MORF4L2/MRGX, MRGBP, YEATS4/GAS41, VPS72/YL1 and MEAF6. The NuA4 complex interacts with MYC and the adenovirus E1A protein. RUVBL1 interacts with EP400. Component of a NuA4-related complex which contains EP400, TRRAP/PAF400, SRCAP, BRD8/SMAP, EPC1, DMAP1/DNMAP1, RUVBL1/TIP49, RUVBL2, actin, ACTL6A/BAF53A, VPS72 and YEATS4/GAS41. Component of the BAF53 complex, at least composed of ACTL6A/BAF53A, RUVBL1/TIP49, SMARCA2/BRM, and TRRAP/PAF400. Component of some MLL1/MLL complex, at least composed of the core components KMT2A/MLL1, ASH2L, HCFC1/HCF1, WDR5 and RBBP5, as well as the facultative components BACC1, CHD8, E2F6, HSP70, INO80C, KANSL1, LAS1L, MAX, MCRS1, MGA, MYST1/MOF, PELP1, PHF20, PRP31, RING2, RUVB1/TIP49A, RUVB2/TIP49B, SENP3, TAF1, TAF4, TAF6, TAF7, TAF9 and TEX10. Associates with alpha and gamma tubulins, particularly during metaphase and early anaphase. Interacts with NPAT. Component of the chromatin-remodeling INO80 complex; specifically part of a complex module associated with the helicase ATP-binding and the helicase C-terminal domain of INO80. Interacts with IGHMBP2. Interacts with OFD1. Interacts with HINT1. Component of a complex with USP49 and PSMC5. Component of a SWR1-like complex. Component of the R2TP complex composed at least of RUVBL1, RUVBL2, RPAP3 and PIHD1. Component of the PAQosome complex which is responsible for the biogenesis of several protein complexes and which consists of R2TP complex members RUVBL1, RUVBL2, RPAP3 and PIH1D1, URI complex members PFDN2, PFDN6, PDRG1, UXT and URI1 as well as ASDURF, POLR2E and DNAAF10/WDR92. Interacts with PIH1D1. Interacts with ITFG1. Interacts with WAC; WAC positively regulates MTOR activity by promoting the assembly of the TTT complex composed of TELO2, TTI1 and TTI2 and the RUVBL complex composed of RUVBL1 and RUVBL2 into the TTT-RUVBL complex which leads to the dimerization of the mTORC1 complex and its subsequent activation. The RUVBL1/RUVBL2 complex interacts with ZNHIT1 (via HIT-type zinc finger), ZNHIT3 (via HIT-type zinc finger), ZNHIT6 (via HIT-type zinc finger) and DDX59/ZNHIT5 (via HIT-type zinc finger) in the presence of ADP. Interacts with NOPCHAP1; the interaction is direct and disrupted upon ATP binding. Interacts with SMG1. Interacts with NOP2, NOP56 and NUFIP1. In terms of assembly, (Microbial infection) Interacts with Mumps L polymerase; this interaction regulates the viral transcription. Ubiquitously expressed with high expression in heart, skeletal muscle and testis.

It is found in the nucleus matrix. Its subcellular location is the nucleus. The protein resides in the nucleoplasm. It localises to the cytoplasm. The protein localises to the membrane. It is found in the cytoskeleton. Its subcellular location is the microtubule organizing center. The protein resides in the centrosome. It localises to the dynein axonemal particle. It catalyses the reaction ATP + H2O = ADP + phosphate + H(+). Its function is as follows. Possesses single-stranded DNA-stimulated ATPase and ATP-dependent DNA helicase (3' to 5') activity; hexamerization is thought to be critical for ATP hydrolysis and adjacent subunits in the ring-like structure contribute to the ATPase activity. Component of the NuA4 histone acetyltransferase complex which is involved in transcriptional activation of select genes principally by acetylation of nucleosomal histones H4 and H2A. This modification may both alter nucleosome-DNA interactions and promote interaction of the modified histones with other proteins which positively regulate transcription. This complex may be required for the activation of transcriptional programs associated with oncogene and proto-oncogene mediated growth induction, tumor suppressor mediated growth arrest and replicative senescence, apoptosis, and DNA repair. The NuA4 complex ATPase and helicase activities seem to be, at least in part, contributed by the association of RUVBL1 and RUVBL2 with EP400. NuA4 may also play a direct role in DNA repair when recruited to sites of DNA damage. Component of a SWR1-like complex that specifically mediates the removal of histone H2A.Z/H2AZ1 from the nucleosome. Proposed core component of the chromatin remodeling INO80 complex which exhibits DNA- and nucleosome-activated ATPase activity and catalyzes ATP-dependent nucleosome sliding. Plays an essential role in oncogenic transformation by MYC and also modulates transcriptional activation by the LEF1/TCF1-CTNNB1 complex. Essential for cell proliferation. May be able to bind plasminogen at cell surface and enhance plasminogen activation. This Homo sapiens (Human) protein is RuvB-like 1.